A 532-amino-acid polypeptide reads, in one-letter code: Protein PTST homolog 2, chloroplastic (532 aa).

Residues 1–71 (MVSINSGPIS…KPRKKSCCSR (71 aa)) constitute a chloroplast transit peptide. Disordered regions lie at residues 165-201 (QLPN…SRND), 256-292 (EVDG…SETW), 314-347 (SSGL…EDVN), and 367-388 (HSLR…TAGN). Basic and acidic residues predominate over residues 173 to 183 (EMDKTLNHGDL). The segment covering 320–339 (VKKDDTKKDSGDSMNGKDRI) has biased composition (basic and acidic residues). Positions 389 to 454 (LENLSDDWEY…ASRALRLLRT (66 aa)) form a coiled coil.

As to quaternary structure, interacts with PTST3 and SS4. Interacts with MFP1; the interaction is essential for the initiation of starch granules biosynthesis in leaf chloroplasts, for the correct location of the process in the stromal spaces between the thylakoid membranes, and for the association of this protein with the thylakoid membranes. Interacts with PII1/MRC; the interaction is essential for the initiation of starch granules biosynthesis in leaf chloroplasts.

The protein localises to the plastid. It is found in the chloroplast. The protein resides in the chloroplast thylakoid membrane. Its function is as follows. Involved in starch granule initiation in leaf chloroplasts. Binds and delivers suitable maltooligosaccharide substrates to starch synthase 4 (SS4). This chain is Protein PTST homolog 2, chloroplastic, found in Arabidopsis thaliana (Mouse-ear cress).